Consider the following 197-residue polypeptide: Elongation factor Ts (197 aa).

The interval 81 to 84 (TDFV) is involved in Mg(2+) ion dislocation from EF-Tu.

Belongs to the EF-Ts family.

The protein resides in the cytoplasm. In terms of biological role, associates with the EF-Tu.GDP complex and induces the exchange of GDP to GTP. It remains bound to the aminoacyl-tRNA.EF-Tu.GTP complex up to the GTP hydrolysis stage on the ribosome. The sequence is that of Elongation factor Ts from Fervidobacterium nodosum (strain ATCC 35602 / DSM 5306 / Rt17-B1).